Here is a 424-residue protein sequence, read N- to C-terminus: UDP-N-acetylglucosamine 1-carboxyvinyltransferase (424 aa).

22 to 23 (KN) is a phosphoenolpyruvate binding site. Arginine 93 is a UDP-N-acetyl-alpha-D-glucosamine binding site. The active-site Proton donor is cysteine 117. Cysteine 117 carries the post-translational modification 2-(S-cysteinyl)pyruvic acid O-phosphothioketal. UDP-N-acetyl-alpha-D-glucosamine contacts are provided by residues 122 to 126 (RPIDL), aspartate 307, and valine 329.

The protein belongs to the EPSP synthase family. MurA subfamily.

It is found in the cytoplasm. It carries out the reaction phosphoenolpyruvate + UDP-N-acetyl-alpha-D-glucosamine = UDP-N-acetyl-3-O-(1-carboxyvinyl)-alpha-D-glucosamine + phosphate. It participates in cell wall biogenesis; peptidoglycan biosynthesis. Its function is as follows. Cell wall formation. Adds enolpyruvyl to UDP-N-acetylglucosamine. The polypeptide is UDP-N-acetylglucosamine 1-carboxyvinyltransferase (Chlorobium luteolum (strain DSM 273 / BCRC 81028 / 2530) (Pelodictyon luteolum)).